The primary structure comprises 526 residues: MLO-like protein 1 (526 aa).

The Extracellular portion of the chain corresponds to 1-11 (MGHGGEGMSLE). A helical transmembrane segment spans residues 12–32 (FTPTWVVAGVCTVIVAISLAV). The Cytoplasmic segment spans residues 33–61 (ERLLHYFGTVLKKKKQKPLYEALQKVKEE). A helical transmembrane segment spans residues 62–82 (LMLLGFISLLLTVFQGLISKF). The Extracellular portion of the chain corresponds to 83–160 (CVKENVLMHM…LSLEALHHLH (78 aa)). Residues 161-181 (IFIFVLAISHVTFCVLTVIFG) form a helical membrane-spanning segment. Topologically, residues 182 to 287 (STRIHQWKKW…MRALEDDFKQ (106 aa)) are cytoplasmic. The next 2 membrane-spanning stretches (helical) occupy residues 288–308 (VVGI…LNVN) and 309–329 (GWHT…AVGT). Residues 330–372 (KLEHVIAQLAHEVAEKHVAIEGDLVVKPSDEHFWFSKPQIVLY) are Cytoplasmic-facing. Residues 373-393 (LIHFILFQNAFEIAFFFWIWV) form a helical membrane-spanning segment. Topologically, residues 394–412 (TYGFDSCIMGQVRYIVPRL) are extracellular. Residues 413–433 (VIGVFIQVLCSYSTLPLYAIV) traverse the membrane as a helical segment. The Cytoplasmic portion of the chain corresponds to 434–526 (SQMGSSFKKA…NNEITPDHNN (93 aa)). Residues 447–468 (ENVQVGLVGWAQKVKQKRDLKA) are calmodulin-binding. Residues 471–526 (SNGDEGSSQAGPGPDSGSGSAPAAGPGAGFAGIQLSRVTRNNAGDTNNEITPDHNN) form a disordered region. Positions 476–495 (GSSQAGPGPDSGSGSAPAAG) are enriched in low complexity. Residues 506–520 (SRVTRNNAGDTNNEI) are compositionally biased toward polar residues.

It belongs to the MLO family.

Its subcellular location is the cell membrane. May be involved in modulation of pathogen defense and leaf cell death. Activity seems to be regulated by Ca(2+)-dependent calmodulin binding and seems not to require heterotrimeric G proteins. The polypeptide is MLO-like protein 1 (MLO1) (Arabidopsis thaliana (Mouse-ear cress)).